We begin with the raw amino-acid sequence, 505 residues long: AMP phosphorylase (505 aa).

Residues G170, 196-201 (SRAITS), and T205 each bind AMP. D258 (proton donor) is an active-site residue. AMP contacts are provided by S266 and K290.

This sequence belongs to the thymidine/pyrimidine-nucleoside phosphorylase family. Type 2 subfamily.

The enzyme catalyses AMP + phosphate = alpha-D-ribose 1,5-bisphosphate + adenine. The catalysed reaction is CMP + phosphate = cytosine + alpha-D-ribose 1,5-bisphosphate. It carries out the reaction UMP + phosphate = alpha-D-ribose 1,5-bisphosphate + uracil. Catalyzes the conversion of AMP and phosphate to adenine and ribose 1,5-bisphosphate (R15P). Exhibits phosphorylase activity toward CMP and UMP in addition to AMP. Functions in an archaeal AMP degradation pathway, together with R15P isomerase and RubisCO. The sequence is that of AMP phosphorylase from Methanococcus maripaludis (strain DSM 14266 / JCM 13030 / NBRC 101832 / S2 / LL).